Reading from the N-terminus, the 421-residue chain is D-amino acid dehydrogenase (421 aa).

3-17 (ILILGSGVVGTASAY) contributes to the FAD binding site.

This sequence belongs to the DadA oxidoreductase family. Requires FAD as cofactor.

It catalyses the reaction a D-alpha-amino acid + A + H2O = a 2-oxocarboxylate + AH2 + NH4(+). The protein operates within amino-acid degradation; D-alanine degradation; NH(3) and pyruvate from D-alanine: step 1/1. Its function is as follows. Oxidative deamination of D-amino acids. The sequence is that of D-amino acid dehydrogenase from Xanthobacter autotrophicus (strain ATCC BAA-1158 / Py2).